The sequence spans 298 residues: 4-hydroxy-tetrahydrodipicolinate synthase (298 aa).

Position 51 (T51) interacts with pyruvate. Y139 serves as the catalytic Proton donor/acceptor. K167 (schiff-base intermediate with substrate) is an active-site residue. Residue I209 participates in pyruvate binding.

The protein belongs to the DapA family. As to quaternary structure, homotetramer; dimer of dimers.

It is found in the cytoplasm. It carries out the reaction L-aspartate 4-semialdehyde + pyruvate = (2S,4S)-4-hydroxy-2,3,4,5-tetrahydrodipicolinate + H2O + H(+). It participates in amino-acid biosynthesis; L-lysine biosynthesis via DAP pathway; (S)-tetrahydrodipicolinate from L-aspartate: step 3/4. Its function is as follows. Catalyzes the condensation of (S)-aspartate-beta-semialdehyde [(S)-ASA] and pyruvate to 4-hydroxy-tetrahydrodipicolinate (HTPA). This is 4-hydroxy-tetrahydrodipicolinate synthase from Histophilus somni (strain 129Pt) (Haemophilus somnus).